A 577-amino-acid chain; its full sequence is Cytidine monophosphate-N-acetylneuraminic acid hydroxylase (577 aa).

A propeptide spanning residues 1 to 4 is cleaved from the precursor; the sequence is MMDR. One can recognise a Rieske domain in the interval 14–112; sequence LSPAEVANLK…IEMDENNGLS (99 aa). [2Fe-2S] cluster-binding residues include Cys-54, His-56, Cys-75, and His-78.

It belongs to the CMP-Neu5Ac hydroxylase family. It depends on [2Fe-2S] cluster as a cofactor. In terms of tissue distribution, expressed in all tissues tested, except in brain.

The protein localises to the cytoplasm. It localises to the endoplasmic reticulum. The catalysed reaction is CMP-N-acetyl-beta-neuraminate + 2 Fe(II)-[cytochrome b5] + O2 + 2 H(+) = CMP-N-glycoloyl-beta-neuraminate + 2 Fe(III)-[cytochrome b5] + H2O. It participates in amino-sugar metabolism; N-acetylneuraminate metabolism. In terms of biological role, sialic acids are components of carbohydrate chains of glycoconjugates and are involved in cell-cell recognition and cell-pathogen interactions. Catalyzes the conversion of CMP-N-acetylneuraminic acid (CMP-Neu5Ac) into its hydroxylated derivative CMP-N-glycolylneuraminic acid (CMP-Neu5Gc), a sialic acid abundantly expressed at the surface of many cells. This chain is Cytidine monophosphate-N-acetylneuraminic acid hydroxylase (Cmah), found in Mus musculus (Mouse).